We begin with the raw amino-acid sequence, 482 residues long: UDP-N-acetylmuramate--L-alanine ligase (482 aa).

ATP is bound at residue 122–128 (GTHGKTT).

It belongs to the MurCDEF family.

It is found in the cytoplasm. It carries out the reaction UDP-N-acetyl-alpha-D-muramate + L-alanine + ATP = UDP-N-acetyl-alpha-D-muramoyl-L-alanine + ADP + phosphate + H(+). It participates in cell wall biogenesis; peptidoglycan biosynthesis. Its function is as follows. Cell wall formation. The sequence is that of UDP-N-acetylmuramate--L-alanine ligase from Mycolicibacterium smegmatis (strain ATCC 700084 / mc(2)155) (Mycobacterium smegmatis).